Reading from the N-terminus, the 329-residue chain is Large ribosomal subunit protein uL3 (329 aa).

The protein belongs to the universal ribosomal protein uL3 family. As to quaternary structure, part of the 50S ribosomal subunit. Forms a cluster with proteins L14 and L24e.

One of the primary rRNA binding proteins, it binds directly near the 3'-end of the 23S rRNA, where it nucleates assembly of the 50S subunit. The chain is Large ribosomal subunit protein uL3 from Picrophilus torridus (strain ATCC 700027 / DSM 9790 / JCM 10055 / NBRC 100828 / KAW 2/3).